A 116-amino-acid chain; its full sequence is Protein AV2 (116 aa).

Belongs to the geminiviridae protein AV2/V2 family. Interacts with host SGS3.

The protein localises to the host cytoplasm. The protein resides in the host perinuclear region. In terms of biological role, through its interaction with host SGS3, acts as a suppressor of RNA-mediated gene silencing, also known as post-transcriptional gene silencing (PTGS), a mechanism of plant viral defense that limits the accumulation of viral RNAs. This chain is Protein AV2, found in Mungbean yellow mosaic virus (strain Vigna) (MYMV).